The primary structure comprises 434 residues: Probable oxaloacetate decarboxylase beta chain (434 aa).

9 helical membrane passes run 13-35 (IMHLELGQALMMLISLVLLWLAI), 122-144 (VLALFYKVAIGYGVAPLIIFMGV), 159-181 (TLLLGAAAQFGIFATIIGALLLN), 186-208 (ISFTLPQAAAIGIIGGADGPTAI), 223-245 (AVAAYSYMALVPLIQPPIMRALT), 266-288 (ILFPIVLVTLVALLLPDAAPLLG), 308-327 (TAQNALINIVTIFLGLAVGS), 339-361 (TLGILLLGVVAFCIGTASGVIMA), and 403-425 (FLLMHAMGPNVAGVIGSAIAAGV).

The protein belongs to the GcdB/MmdB/OadB family. Heterotrimer of an alpha, a beta and a gamma subunit. The cofactor is Na(+).

The protein localises to the cell membrane. The catalysed reaction is oxaloacetate + 2 Na(+)(in) + H(+) = pyruvate + 2 Na(+)(out) + CO2. Functionally, catalyzes the decarboxylation of oxaloacetate coupled to Na(+) translocation. The protein is Probable oxaloacetate decarboxylase beta chain (oadB) of Pasteurella multocida (strain Pm70).